Consider the following 79-residue polypeptide: CDC42 small effector protein 1 (79 aa).

S-palmitoyl cysteine attachment occurs at residues Cys-10 and Cys-11. The 14-residue stretch at 30–43 (IGEPMNFVHLTHIG) folds into the CRIB domain. Positions 48–79 (GAGDGLAMTGAVQEQMRSKGNRDRPWSNSRGL) are disordered. Basic and acidic residues predominate over residues 63-72 (MRSKGNRDRP).

It belongs to the CDC42SE/SPEC family. As to quaternary structure, interacts with CDC42 (in GTP-bound form). Interacts weakly with RAC1 and not at all with RHOA.

Its subcellular location is the cytoplasm. It localises to the cytoskeleton. The protein resides in the cell membrane. Probably involved in the organization of the actin cytoskeleton by acting downstream of CDC42, inducing actin filament assembly. Alters CDC42-induced cell shape changes. In activated T-cells, may play a role in CDC42-mediated F-actin accumulation at the immunological synapse. May play a role in early contractile events in phagocytosis in macrophages. The polypeptide is CDC42 small effector protein 1 (CDC42SE1) (Pongo abelii (Sumatran orangutan)).